The chain runs to 744 residues: Protein zyg-11 homolog B (744 aa).

LRR repeat units follow at residues 185–208 (LPRL…LACK), 216–236 (MHHL…VREL), and 237–261 (KHLN…LLEQ).

This sequence belongs to the zyg-11 family. In terms of assembly, (Microbial infection) Interacts with SARS-COV-2 protein ORF10. Interacts with ELOC/Elongin C. Part of an E3 ubiquitin ligase complex including ZYG11B, CUL2 and Elongin BC. Post-translationally, (Microbial infection) Ubiquitinated; leading to proteasomal degradation in the presence of herpes simplex virus 1/HHV-1.

It localises to the cytoplasm. Serves as substrate adapter subunit in the E3 ubiquitin ligase complex ZYG11B-CUL2-Elongin BC. Acts to target substrates bearing N-terminal degrons for proteasomal degradation with the first four residues of substrates being the key recognition elements. Prefers Nt-Gly but also has the capacity to recognize Nt-Ser, -Ala and -Cys. Involved in the clearance of proteolytic fragments generated by caspase cleavage during apoptosis since N-terminal glycine degrons are strongly enriched at caspase cleavage sites. Also important in the quality control of protein N-myristoylation in which N-terminal glycine degrons are conditionally exposed after a failure of N-myristoylation. In addition, plays a role in the amplification of cGAS to enhance innate immune response. Mechanistically, strengthens the processes of cGAS binding with dsDNA and assembling oligomers and also accelerates and stabilizes cGAS-DNA condensation, thereby enhancing production of antiviral IFNs and inflammatory cytokines. The protein is Protein zyg-11 homolog B of Homo sapiens (Human).